The following is a 200-amino-acid chain: uncharacterized protein (200 aa).

The tract at residues 1–21 is disordered; it reads MSNSAQRDARNSRDESARASD. Over residues 7-21 the composition is skewed to basic and acidic residues; that stretch reads RDARNSRDESARASD.

This is an uncharacterized protein from Mycobacterium tuberculosis (strain ATCC 25618 / H37Rv).